The primary structure comprises 3960 residues: Replicase polyprotein 1ab (3960 aa).

A C4-type; atypical zinc finger spans residues 8-28; the sequence is CTCTPNARVFMAEGQVYCTRC. The Peptidase C31 domain maps to 69 to 180; sequence ECSPAGACWL…EDFCPFECAM (112 aa). The segment at 69-182 is PCP1-alpha; that stretch reads ECSPAGACWL…FCPFECAMAT (114 aa). Catalysis depends on for Nsp1-alpha papain-like cysteine proteinase activity residues cysteine 76 and histidine 146. The interval 199–200 is important for host EIF2AK2 inhibition; the sequence is VS. The segment at 263–382 is PCP1-beta; the sequence is DTVPEGNCWW…IFRFGSHKWY (120 aa). The 121-residue stretch at 263-383 folds into the Peptidase C32 domain; that stretch reads DTVPEGNCWW…FRFGSHKWYG (121 aa). Active-site for Nsp1-beta papain-like cysteine proteinase activity residues include cysteine 270 and histidine 339. Residues 426–513 form an OTU-like region; that stretch reads LKHYSPPAEG…GEHWTVTVTP (88 aa). Residues 428–535 enclose the Peptidase C33 domain; the sequence is HYSPPAEGNC…QGCCGHKGGL (108 aa). Active-site for Nsp2 cysteine proteinase activity residues include cysteine 437 and histidine 506. Disordered regions lie at residues 809 to 882, 899 to 979, and 1156 to 1213; these read RWTP…ATPS, TPLS…GVLG, and PLAF…GGGP. Over residues 810-819 the composition is skewed to pro residues; sequence WTPPPPPPKV. Helical transmembrane passes span 1266–1286, 1296–1316, 1345–1365, 1368–1388, 1583–1603, 1650–1670, 1685–1705, and 1719–1739; these read LCLF…LGVF, GVFG…SDPV, SLVV…LGGA, IWHF…GAYV, LMAA…GIYV, ALVA…FVSI, CVLL…LCVF, and ILWL…LAMV. An HD1 region spans residues 1266 to 1388; it reads LCLFLCYSYP…ADCILAGAYV (123 aa). The HD2 stretch occupies residues 1583–1745; sequence LMAALHVACS…LAMVLLVSLW (163 aa). The 204-residue stretch at 1810–2013 folds into the Peptidase S32 domain; sequence GAFRTRKPSL…ALLAAKPELE (204 aa). Active-site charge relay system; for 3C-like serine proteinase activity residues include histidine 1848, aspartate 1873, and serine 1927. The next 5 helical transmembrane spans lie at 2012–2032, 2060–2080, 2092–2112, 2137–2157, and 2164–2184; these read LEGG…WRMM, FSFG…VLMI, WSLA…LAAT, SPVP…LYLF, and HILV…FAEG. The tract at residues 2036–2157 is HD3; it reads WTPLVAVSFF…HLLAIILYLF (122 aa). Residues 2329–2358 are disordered; that stretch reads PTPTPPPAPVPIPLPPKVLENGPNAWGDED. Residues 2330–2344 are compositionally biased toward pro residues; that stretch reads TPTPPPAPVPIPLPP. The 163-residue stretch at 2488 to 2650 folds into the NiRAN domain; it reads IIDKLQGLTK…LPYKLYPVRG (163 aa). The RdRp catalytic domain occupies 2889-3023; it reads GRCLEADLAS…YAESPTMPNY (135 aa). The AV ZBD domain occupies 3144–3207; the sequence is GKKSRVCGYC…SPVGKGTSPL (64 aa). 12 residues coordinate Zn(2+): cysteine 3150, cysteine 3153, cysteine 3163, cysteine 3168, histidine 3171, histidine 3173, histidine 3175, histidine 3177, cysteine 3184, histidine 3186, cysteine 3193, and cysteine 3196. One can recognise a (+)RNA virus helicase ATP-binding domain in the interval 3264 to 3416; sequence ASTALLPTCK…VFDIMPQTQL (153 aa). 3292 to 3299 contacts ATP; it reads GPPGAGKT. The 129-residue stretch at 3417–3545 folds into the (+)RNA virus helicase C-terminal domain; it reads KTIWRFGQNI…AVHCDGQLIV (129 aa). Residues 3584–3680 enclose the AV-Nsp11N/CoV-Nsp15M domain; the sequence is EGSSSPLPKV…LTKFVKGGAQ (97 aa). Residues 3682–3804 form the NendoU domain; that stretch reads LPETVFSTGR…MVWKDKTAYF (123 aa). Active-site residues include histidine 3713, histidine 3728, and lysine 3757.

It belongs to the arteriviridae polyprotein family. As to quaternary structure, nsp1-alpha papain-like: Interacts with host RNF31. In terms of assembly, interacts with host EIF2AK2; this interaction occurs in host stress granules and leads to EIF2AK2 inhibition. Interacts with host G3BP1; this interaction probably plays a role in Nsp1-beta-mediated inhibition of host EIF2AK2. Interacts with host DDX18; this interaction redistributes host DDX18 to the cytoplasm. As to quaternary structure, interacts with host IFITM1. In terms of assembly, interacts with host DDX5. Interacts with host OTULIN. As to quaternary structure, interacts with host LGALS3. In terms of processing, specific enzymatic cleavages in vivo by its own proteases yield mature proteins. Nsp1 is autocleaved into two subunits, Nsp1-alpha and Nsp1-beta. There are two alternative pathways for processing. Either nsp4-5 is cleaved, which represents the major pathway or the nsp5-6 and nsp6-7 are processed, which represents the minor pathway. The major pathway occurs when nsp2 acts as a cofactor for nsp4.

Its subcellular location is the host nucleus. The protein resides in the host cytoplasm. The protein localises to the host membrane. It localises to the host endoplasmic reticulum. It is found in the host perinuclear region. The catalysed reaction is RNA(n) + a ribonucleoside 5'-triphosphate = RNA(n+1) + diphosphate. It carries out the reaction ATP + H2O = ADP + phosphate + H(+). The enzyme catalyses Thiol-dependent hydrolysis of ester, thioester, amide, peptide and isopeptide bonds formed by the C-terminal Gly of ubiquitin (a 76-residue protein attached to proteins as an intracellular targeting signal).. It catalyses the reaction uridylyl-uridylyl-ribonucleotide-RNA = a 3'-end uridylyl-2',3'-cyclophospho-uridine-RNA + a 5'-end dephospho-ribonucleoside-RNA. Its function is as follows. Contains the activities necessary for the transcription of negative stranded RNA, leader RNA, subgenomic mRNAs and progeny virion RNA as well as proteinases responsible for the cleavage of the polyprotein into functional products. Functionally, inhibits host IFN-beta production. Plays a role in the degradation of the host transcriptional activator CREBBP protein. The degradation of host CREBBP which is a key component of the IFN enhanceosome is likely responsible for the inhibition of interferon mediated by Nsp1-alpha. Also participates in the inhibition of host NF-kappa-B activation by counteracting LUBAC-dependent induction of NF-kappa-B. Reduces host NEMO ubiquitination by blocking the interaction between the two LUBAC complex components RNF31 and SHARPIN. Plays a role in blocking host mRNA nuclear export to the cytoplasm and subversion of host protein synthesis. Additionally, inhibits the interferon-activated JAK/STAT signal transduction by mediating the ubiquitination and subsequent proteasomal degradation of host KPNA1. Repurposes the host antiviral stress granules into a proviral platform to counteract the EIF2AK2/PKR restriction, thereby regulating the host inflammatory response. In terms of biological role, multifunctional protein that acts as a viral protease and as a viral antagonist of host immune response. Cleaves the nsp2/nsp3 site in the viral polyprotein. Displays deubiquitinating activity that cleaves both ubiquitinated and ISGylated products and therefore inhibits ubiquitin and ISG15-dependent host innate immunity. Also deubiquinates host NFKBIA, thereby interfering with NFKBIA degradation and impairing subsequent NF-kappa-B activation. Its function is as follows. Plays a role in the inhibition of the immune response by interacting with host IFITM1. This interaction leads to the proteasomal degradation of the IFN-induced antiviral protein IFITM1. Functionally, cleaves the majority of cleavage sites present in the C-terminus of the polyprotein. Triggers host apoptosis through caspase-3, -8, and -9 activations. Subverts host innate immune responses through its protease activity. Targets the NF-kappa-B essential modulator NEMO and mediates its cleavage. Blocks host interferon beta induction and downstream signaling by cleaving mitochondrial MAVS, dislodging it from the mitochondria. Impairs host defense by cleaving host mRNA-decapping enzyme DCP1A to attenuate its antiviral activity. Plays a role in the initial induction of autophagosomes from host endoplasmic reticulum. In terms of biological role, plays a role in the inhibition of host STAT3 signaling pathway by inducing the degradation of STAT3. Its function is as follows. Responsible for replication and transcription of the viral RNA genome. Functionally, displays RNA and DNA duplex-unwinding activities with 5' to 3' polarity. Plays a role in viral transcription/replication and prevents the simultaneous activation of host cell dsRNA sensors, such as MDA5/IFIH1, OAS, PKR and NLRP3 inflammasome. Acts by degrading the 5'-polyuridines generated during replication of the poly(A) region of viral genomic and subgenomic RNAs. Catalyzes a two-step reaction in which a 2'3'-cyclic phosphate (2'3'-cP) is first generated by 2'-O transesterification, which is then hydrolyzed to a 3'-phosphate (3'-P). If not degraded, poly(U) RNA would hybridize with poly(A) RNA tails and activate host dsRNA sensors. Also plays a role in the inhibition of host type I interferon production by recruiting host OTULIN to promote removal of linear ubiquitination targeting host NEMO. The chain is Replicase polyprotein 1ab (rep) from Porcine reproductive and respiratory syndrome virus (strain VR-2332) (PRRSV).